We begin with the raw amino-acid sequence, 424 residues long: Endochitinase 1 (424 aa).

The signal sequence occupies residues 1-22 (MPSLFAQSLAIIATLQATLGLA). Positions 39–402 (YVNAVYFTNW…GTSSNKLGGP (364 aa)) constitute a GH18 domain. 3 N-linked (GlcNAc...) asparagine glycosylation sites follow: asparagine 74, asparagine 78, and asparagine 96. Chitin-binding positions include 103–104 (GN) and 130–133 (GGWT). Glutamate 172 functions as the Proton donor in the catalytic mechanism. Chitin contacts are provided by residues tyrosine 173 and 238 to 241 (MAYD). Asparagine 248 and asparagine 347 each carry an N-linked (GlcNAc...) asparagine glycan. Tryptophan 379 lines the chitin pocket. Positions 385–412 (RQGPDSLIGTSSNKLGGPDTTENLLNYP) are disordered. Over residues 392–408 (IGTSSNKLGGPDTTENL) the composition is skewed to polar residues.

Belongs to the glycosyl hydrolase 18 family. Chitinase class V subfamily.

The protein localises to the secreted. It catalyses the reaction Random endo-hydrolysis of N-acetyl-beta-D-glucosaminide (1-&gt;4)-beta-linkages in chitin and chitodextrins.. Functionally, secreted chitinase involved in the degradation of chitin, a component of the cell walls of fungi and exoskeletal elements of some animals (including worms and arthropods). Participates in the infection process and directly acts in the penetration process of the host cuticle. The chain is Endochitinase 1 (chit1) from Metarhizium robertsii (strain ARSEF 23 / ATCC MYA-3075) (Metarhizium anisopliae (strain ARSEF 23)).